We begin with the raw amino-acid sequence, 288 residues long: Acetyl-coenzyme A carboxylase carboxyl transferase subunit beta (288 aa).

The CoA carboxyltransferase N-terminal domain occupies 34-288 (LFAKCPACKH…HLVAFHGGVS (255 aa)). 4 residues coordinate Zn(2+): C38, C41, C56, and C59. The segment at 38–59 (CPACKHMIYQKDLGPAKICPTC) adopts a C4-type zinc-finger fold.

The protein belongs to the AccD/PCCB family. In terms of assembly, acetyl-CoA carboxylase is a heterohexamer composed of biotin carboxyl carrier protein (AccB), biotin carboxylase (AccC) and two subunits each of ACCase subunit alpha (AccA) and ACCase subunit beta (AccD). Requires Zn(2+) as cofactor.

The protein localises to the cytoplasm. It carries out the reaction N(6)-carboxybiotinyl-L-lysyl-[protein] + acetyl-CoA = N(6)-biotinyl-L-lysyl-[protein] + malonyl-CoA. Its pathway is lipid metabolism; malonyl-CoA biosynthesis; malonyl-CoA from acetyl-CoA: step 1/1. Component of the acetyl coenzyme A carboxylase (ACC) complex. Biotin carboxylase (BC) catalyzes the carboxylation of biotin on its carrier protein (BCCP) and then the CO(2) group is transferred by the transcarboxylase to acetyl-CoA to form malonyl-CoA. The polypeptide is Acetyl-coenzyme A carboxylase carboxyl transferase subunit beta (Streptococcus equi subsp. equi (strain 4047)).